Reading from the N-terminus, the 902-residue chain is Magnesium-transporting ATPase, P-type 1 (902 aa).

The Cytoplasmic segment spans residues 1–98 (MLKIITRQLF…KPSPWWVHLW (98 aa)). The chain crosses the membrane as a helical span at residues 99-119 (VCYRNPFNILLTILGGISYAT). A topological domain (extracellular) is located at residue E120. The chain crosses the membrane as a helical span at residues 121-141 (DLFAAGVIALMVGISTLLNFV). Residues 142–291 (QEARSTKAAD…QNAFQKGISR (150 aa)) are Cytoplasmic-facing. A helical membrane pass occupies residues 292–312 (VSMLLIRFMLVMAPVVLIING). The Extracellular portion of the chain corresponds to 313-321 (YTKGDWWEA). A helical membrane pass occupies residues 322–339 (ALFALSVAVGLTPEMLPM). E335 serves as a coordination point for Mg(2+). Residues 340–699 (IVTSTLARGA…IEGRRTFSNM (360 aa)) are Cytoplasmic-facing. The 4-aspartylphosphate intermediate role is filled by D377. Positions 645, 649, and 713 each coordinate Mg(2+). A helical membrane pass occupies residues 700 to 719 (LKYIKMTASSNFGNVFSVLV). At 720 to 728 (ASAFLPFLP) the chain is on the extracellular side. The chain crosses the membrane as a helical span at residues 729–748 (MLPLHLLIQNLLYDVSQVAI). Positions 738 and 742 each coordinate Mg(2+). At 749–770 (PFDNVDEEQIQKPQRWNPADLG) the chain is on the cytoplasmic side. A helical membrane pass occupies residues 771–794 (RFMVFFGPISSIFDILTFCLMWWV). The Extracellular segment spans residues 795–803 (FHANTPETQ). The chain crosses the membrane as a helical span at residues 804-822 (TLFQSGWFVVGLLSQTLIV). Over 823–835 (HMIRTRRLPFIQS) the chain is Cytoplasmic. A helical transmembrane segment spans residues 836-855 (RAAWPLMAMTLLVMVVGVSL). Over 856-870 (PFSPLASYLQLQALP) the chain is Extracellular. The helical transmembrane segment at 871–890 (LSYFPWLIAILVGYMTLTQL) threads the bilayer. Over 891–902 (VKGFYSRRYGWQ) the chain is Cytoplasmic.

This sequence belongs to the cation transport ATPase (P-type) (TC 3.A.3) family. Type IIIB subfamily.

Its subcellular location is the cell inner membrane. It catalyses the reaction Mg(2+)(out) + ATP + H2O = Mg(2+)(in) + ADP + phosphate + H(+). Functionally, mediates magnesium influx to the cytosol. This is Magnesium-transporting ATPase, P-type 1 (mgtA) from Salmonella typhimurium (strain 14028s / SGSC 2262).